A 410-amino-acid polypeptide reads, in one-letter code: Exopolygalacturonase (410 aa).

The N-terminal stretch at 1–22 is a signal peptide; sequence MACTNNAMRALFLLVLFCIVHG. The N-linked (GlcNAc...) asparagine glycan is linked to Asn89. 5 PbH1 repeats span residues 192-218, 219-240, 242-262, 272-293, and 337-377; these read CKDMLIKDVTVTAPGDSPNTDGIHMGD, SSGITITNTVIGVGDDCISIGP, TSKVNITGVTCGPGHGISIGS, VTDINVKDCTLKKTMFGVRIKA, and ASKV…TMDD. The active-site Proton donor is Asp233. Cysteines 235 and 252 form a disulfide. Asn246 is a glycosylation site (N-linked (GlcNAc...) asparagine). The active site involves His256. A glycan (N-linked (GlcNAc...) asparagine) is linked at Asn349. The cysteines at positions 364 and 370 are disulfide-linked. Asn387 carries an N-linked (GlcNAc...) asparagine glycan. A disulfide bridge connects residues Cys393 and Cys409.

This sequence belongs to the glycosyl hydrolase 28 family. As to expression, pollen.

The protein resides in the secreted. The protein localises to the cell wall. The enzyme catalyses [(1-&gt;4)-alpha-D-galacturonosyl](n) + H2O = alpha-D-galacturonate + [(1-&gt;4)-alpha-D-galacturonosyl](n-1). May function in depolymerizing pectin during pollen development, germination, and tube growth. Acts as an exo-polygalacturonase. The polypeptide is Exopolygalacturonase (PG1) (Zea mays (Maize)).